The chain runs to 336 residues: Zinc finger protein GFI1 homolog pag-3 (336 aa).

5 C2H2-type zinc fingers span residues 126–148, 154–176, 182–204, 210–232, and 238–260; these read FHCQKCTKLFSTIAALEQHQQVH, FECKQCGKTFKRSSTLSTHLLIH, YPCEYCGKRFHQKSDMKKHTYIH, HKCTVCGKAFSQSSNLITHTRKH, and FACDVCGRTFQRKVDRRRHRESH. The tract at residues 253–290 is disordered; sequence RRRHRESHHPGHPEECVSASQISSDLSPKGYMTPPTSN.

As to quaternary structure, may interact with transcription factor unc-3. Expressed in the BDU neurons, the touch neurons, the VA, VB and VC motor neurons, two AVF interneurons and unidentified neurons of the retrovesicular ganglion (at protein level).

Its subcellular location is the nucleus. The protein localises to the cell projection. The protein resides in the axon. It is found in the perikaryon. Its function is as follows. Transcription factor. Plays a role in the determination of neuroblast cell fate and neuronal differentiation. Negatively modulates expression of several components of dense-core vesicles (DCVs), thereby, in a DCV membrane protein ida-1-dependent manner, regulating neurosecretion. Negatively modulates the transcription of its own gene, the mechanosensory gene mec-3, and also other touch neuron-specific genes in the BDU neurons; required for coordinated movement. Required to determine the identity of BDU sensory neurons in concert with transcription factor unc-86, regulating expression of a number of genes, including transcription factors ceh-14 and ahr-1, neuropeptides flp-10, nlp-1 and nlp-15, and tyramine receptor-encoding ser-2. Acts in concert with non-canonical WNT signaling to negatively modulate transcription of mec-3 gene in BDU neurons. May act in concert with transcription factor unc-3 in motor neuron fate determination. May play a role programmed cell death. The sequence is that of Zinc finger protein GFI1 homolog pag-3 from Caenorhabditis elegans.